We begin with the raw amino-acid sequence, 480 residues long: Aspartyl/glutamyl-tRNA(Asn/Gln) amidotransferase subunit B (480 aa).

It belongs to the GatB/GatE family. GatB subfamily. Heterotrimer of A, B and C subunits.

The catalysed reaction is L-glutamyl-tRNA(Gln) + L-glutamine + ATP + H2O = L-glutaminyl-tRNA(Gln) + L-glutamate + ADP + phosphate + H(+). The enzyme catalyses L-aspartyl-tRNA(Asn) + L-glutamine + ATP + H2O = L-asparaginyl-tRNA(Asn) + L-glutamate + ADP + phosphate + 2 H(+). Functionally, allows the formation of correctly charged Asn-tRNA(Asn) or Gln-tRNA(Gln) through the transamidation of misacylated Asp-tRNA(Asn) or Glu-tRNA(Gln) in organisms which lack either or both of asparaginyl-tRNA or glutaminyl-tRNA synthetases. The reaction takes place in the presence of glutamine and ATP through an activated phospho-Asp-tRNA(Asn) or phospho-Glu-tRNA(Gln). The protein is Aspartyl/glutamyl-tRNA(Asn/Gln) amidotransferase subunit B of Streptococcus agalactiae serotype III (strain NEM316).